Consider the following 96-residue polypeptide: Putative pterin-4-alpha-carbinolamine dehydratase (96 aa).

Belongs to the pterin-4-alpha-carbinolamine dehydratase family.

It catalyses the reaction (4aS,6R)-4a-hydroxy-L-erythro-5,6,7,8-tetrahydrobiopterin = (6R)-L-erythro-6,7-dihydrobiopterin + H2O. In Paraburkholderia phytofirmans (strain DSM 17436 / LMG 22146 / PsJN) (Burkholderia phytofirmans), this protein is Putative pterin-4-alpha-carbinolamine dehydratase.